Here is a 365-residue protein sequence, read N- to C-terminus: MTGVAAPERIARAVRADIRALTAYPVADAAGCIKLDAMECPYELPAEVRDDIARAARETPLNRYPAAANPALQAQVRQAFEVPAQAGLLFGNGSDELIHLIIQACCEPGDTVLSPWPSFVYFDMAARLSHARFVGVPLTAGLELDLPATLAAIEAHQPKVVFLALPNNPTGGLWPDAAVRAILDAAPGLVVLDEAYQPFAGHTWMPRIMDEPNAVVMRTVSKIGLAGLRFGYLAGHPAWIAEFDKVRPPYNMDVLSQAVLAAVLRHKPVLDAQADRLRADRQPLADGLAALPGVTVFPSAGNFVLARFCGKLDGNAVHLALKTRKILVRNFSNAHPLLADCLRISVGTPTENAAVLSALQDILSA.

K222 is subject to N6-(pyridoxal phosphate)lysine.

This sequence belongs to the class-II pyridoxal-phosphate-dependent aminotransferase family. Histidinol-phosphate aminotransferase subfamily. In terms of assembly, homodimer. The cofactor is pyridoxal 5'-phosphate.

It catalyses the reaction L-histidinol phosphate + 2-oxoglutarate = 3-(imidazol-4-yl)-2-oxopropyl phosphate + L-glutamate. The protein operates within amino-acid biosynthesis; L-histidine biosynthesis; L-histidine from 5-phospho-alpha-D-ribose 1-diphosphate: step 7/9. The chain is Histidinol-phosphate aminotransferase 2 (hisC2) from Bordetella bronchiseptica (strain ATCC BAA-588 / NCTC 13252 / RB50) (Alcaligenes bronchisepticus).